Here is an 868-residue protein sequence, read N- to C-terminus: DNA mismatch repair protein MutS (868 aa).

620–627 (GPNMGGKS) lines the ATP pocket.

The protein belongs to the DNA mismatch repair MutS family.

In terms of biological role, this protein is involved in the repair of mismatches in DNA. It is possible that it carries out the mismatch recognition step. This protein has a weak ATPase activity. The protein is DNA mismatch repair protein MutS of Xylella fastidiosa (strain Temecula1 / ATCC 700964).